A 285-amino-acid polypeptide reads, in one-letter code: RNA polymerase sigma factor RpoH (285 aa).

Residues Leu-53–Arg-122 form a sigma-70 factor domain-2 region. The short motif at Asp-77–Gln-80 is the Interaction with polymerase core subunit RpoC element. A sigma-70 factor domain-4 region spans residues Ala-229–Met-281. Positions Leu-254–Lys-273 form a DNA-binding region, H-T-H motif.

It belongs to the sigma-70 factor family. RpoH subfamily. Interacts with the RNA polymerase core enzyme.

The protein resides in the cytoplasm. In terms of biological role, sigma factors are initiation factors that promote the attachment of RNA polymerase to specific initiation sites and are then released. This sigma factor is involved in regulation of expression of heat shock genes. The protein is RNA polymerase sigma factor RpoH of Serratia marcescens.